Reading from the N-terminus, the 387-residue chain is tRNA-specific 2-thiouridylase MnmA (387 aa).

Residues 34–41 (AMSGGVDS) and Met-60 contribute to the ATP site. The Nucleophile role is filled by Cys-127. Cys-127 and Cys-223 are disulfide-bonded. Residue Gly-151 participates in ATP binding. An interaction with tRNA region spans residues 173–175 (KDQ). The Cysteine persulfide intermediate role is filled by Cys-223.

The protein belongs to the MnmA/TRMU family.

The protein localises to the cytoplasm. It catalyses the reaction S-sulfanyl-L-cysteinyl-[protein] + uridine(34) in tRNA + AH2 + ATP = 2-thiouridine(34) in tRNA + L-cysteinyl-[protein] + A + AMP + diphosphate + H(+). In terms of biological role, catalyzes the 2-thiolation of uridine at the wobble position (U34) of tRNA, leading to the formation of s(2)U34. This Anaplasma marginale (strain St. Maries) protein is tRNA-specific 2-thiouridylase MnmA.